A 43-amino-acid polypeptide reads, in one-letter code: SPbeta prophage-derived uncharacterized protein YotD (43 aa).

The protein is SPbeta prophage-derived uncharacterized protein YotD (yotD) of Bacillus subtilis (strain 168).